A 210-amino-acid polypeptide reads, in one-letter code: High-affinity nitrate transporter 3.1 (210 aa).

A signal peptide spans 1-22 (MAIQKILFASLLICSLIQSIHG). A helical membrane pass occupies residues 178–198 (LDIASICFSVFSVVALVVFFV).

The protein belongs to the NAR2 family. In terms of assembly, heterotetramer composed of two NRT2.1 and two NRT3.1. Interacts with NRT2.1 and NRT2.3. Interacts with all other NRT2 transporters, including NRT2.5. In terms of tissue distribution, highly expressed in roots. Detected in shoots.

The protein resides in the cell membrane. Functionally, acts as a dual component transporter with NTR2.1. Required for high-affinity nitrate transport. Acts as a repressor of lateral root initiation. May be involved in targeting NRT2 proteins to the plasma membrane. This chain is High-affinity nitrate transporter 3.1 (NRT3.1), found in Arabidopsis thaliana (Mouse-ear cress).